The following is a 314-amino-acid chain: Taste receptor type 2 member 42 (314 aa).

The Extracellular portion of the chain corresponds to 1–7 (MATEMDK). The helical transmembrane segment at 8-28 (IFLTLATVEFIIGMLGNVFIG) threads the bilayer. Residues 29 to 50 (LVNCSEGIKNQKVFSVDFILTC) lie on the Cytoplasmic side of the membrane. The helical transmembrane segment at 51–71 (LAISTIGHLLVILFDSCVVGL) threads the bilayer. The Extracellular portion of the chain corresponds to 72 to 101 (APHLYATDRVRRPVTMLWHMXNHLTTWLAT). The chain crosses the membrane as a helical span at residues 102 to 122 (CLSIFYFFKIAHFPHSLFLWL). Over 123–127 (RWRMN) the chain is Cytoplasmic. A helical membrane pass occupies residues 128-148 (RVIAILLTLSLFLLIFDCLVL). Topologically, residues 149–187 (EMFIDXSLNIIDKSNLTLYLDESKTPYDKLSLLKILLSL) are extracellular. Asn163 is a glycosylation site (N-linked (GlcNAc...) asparagine). A helical transmembrane segment spans residues 188-208 (NSFIPFSLCLTSLLFLFLSLV). At 209-238 (RHTRNLKLSSLGSRDSSTEAHRRAMKMVMS) the chain is on the cytoplasmic side. Residues 239–259 (LLFLFIVHFFSLQVANWTFCI) form a helical membrane-spanning segment. The Extracellular portion of the chain corresponds to 260-265 (LGNNKY). The helical transmembrane segment at 266-286 (TQFVTLALHAFPSCHSFILIL) threads the bilayer. At 287–314 (GNSKLRQTAVRLLWHLRNYTKRPNPLPL) the chain is on the cytoplasmic side.

Belongs to the G-protein coupled receptor T2R family.

The protein resides in the membrane. Functionally, receptor that may play a role in the perception of bitterness and is gustducin-linked. May play a role in sensing the chemical composition of the gastrointestinal content. The activity of this receptor may stimulate alpha gustducin, mediate PLC-beta-2 activation and lead to the gating of TRPM5. The sequence is that of Taste receptor type 2 member 42 (TAS2R42) from Macaca mulatta (Rhesus macaque).